A 445-amino-acid chain; its full sequence is UDP-N-acetylmuramate--L-alanine ligase (445 aa).

113-119 provides a ligand contact to ATP; that stretch reads GSHGKTS.

The protein belongs to the MurCDEF family.

The protein resides in the cytoplasm. It carries out the reaction UDP-N-acetyl-alpha-D-muramate + L-alanine + ATP = UDP-N-acetyl-alpha-D-muramoyl-L-alanine + ADP + phosphate + H(+). It functions in the pathway cell wall biogenesis; peptidoglycan biosynthesis. In terms of biological role, cell wall formation. The protein is UDP-N-acetylmuramate--L-alanine ligase of Enterococcus faecalis (strain ATCC 700802 / V583).